A 274-amino-acid polypeptide reads, in one-letter code: Rhamnulose-1-phosphate aldolase (274 aa).

The active site involves E117. The Zn(2+) site is built by H141, H143, and H212.

Belongs to the aldolase class II family. RhaD subfamily. In terms of assembly, homotetramer. Zn(2+) is required as a cofactor.

The protein localises to the cytoplasm. It catalyses the reaction L-rhamnulose 1-phosphate = (S)-lactaldehyde + dihydroxyacetone phosphate. It functions in the pathway carbohydrate degradation; L-rhamnose degradation; glycerone phosphate from L-rhamnose: step 3/3. Functionally, catalyzes the reversible cleavage of L-rhamnulose-1-phosphate to dihydroxyacetone phosphate (DHAP) and L-lactaldehyde. This Escherichia coli O157:H7 protein is Rhamnulose-1-phosphate aldolase.